We begin with the raw amino-acid sequence, 682 residues long: MDLFQSPGGDLIQDEDSVEVIEMLCIDFRDRLLVALSTTCQSDFREAKKVVEERLRDILETASSLSSTEVTSSPNASPLYNTDAPEDVVPTVGLDVGLDEPMADYSQNTPSITGGTASAEYQNSGDTNQMTLEDPACVDMFAAESQNTGHIPDSCLRDWSFEGVSMKSPSLFDWSSRNSNFPLTQEHENQFAEFLTLFEGEPNFDNWLSTMTWSSLESHSSPINGHSAGATPQLDQMHTVSNSRVARSVVSESTVTNTGSANSLNSGLLANTPSSSHSSVFERACSSVQEPTPEPTPVRGLQRKLRKQGPRQTTEATPCDQQIGPRASRATSQLPERRSMKMVRKEARDTPLTTSPANSTQINIEANTIPSDLSVEYAFGCFSDAKEVFETFYKRLSDDRKHLSSLLMRLFYAVGSPDALRQLRDALDLSRKNSMIASYHDSNDLAATVSVLDQLDATTTLSHILRRYHLVRLLDHRSKLESNHKAAKLAVKGTKRRLKYDCERIELMRRGENADCDANTRSAKERLKYRSKTRALTDLMQTLYPDLSPDSEGITTAGGCEYTRKLTKLRNRLACARNWYQFEETFPGAILALIPCATGDLSISIDHVEKLPSDVLKIFLDYLKERRGVFLSKMSRILSKDLYDVLMRRNVTKRYKLEQTNENSLTDGLHDDDRLLELCETV.

A compositionally biased stretch (low complexity) spans 63 to 73 (SSLSSTEVTSS). Disordered regions lie at residues 63-86 (SSLSSTEVTSSPNASPLYNTDAPE), 107-129 (QNTPSITGGTASAEYQNSGDTNQ), and 251-358 (SEST…SPAN). Polar residues-rich tracts occupy residues 257–279 (NTGSANSLNSGLLANTPSSSHSS) and 310–320 (PRQTTEATPCD). A compositionally biased stretch (basic and acidic residues) spans 335-349 (PERRSMKMVRKEARD).

Its function is as follows. Part of the gene cluster that mediates the biosynthesis of pneumocandins, lipohexapeptides of the echinocandin family that prevent fungal cell wall formation by non-competitive inhibition of beta-1,3-glucan synthase. The 10,12-dimethylmyristoyl side chain is synthesized by the reducing polyketide synthase gloL/GLPKS4. The thioesterase gloN/GLHYD exclusively interacts with gloL/GLPKS4 to maintain turnover of the polyketide side chain. The 10R,12S-dimethylmyristic acid is then transferred to the first thiolation domain of the nonribosomal peptide synthetase gloA/GLNRPS4 by the acyl-AMP ligase gloD/GLligase, followed by its acylation to L-ornithine to trigger elongation of the cyclic hexapeptide. L-ornithine, 4R-hydroxyl-L-proline (generated from L-proline by the dioxygenase gloF/GLOXY2), 3S-hydroxyl-L-homotyrosine (generated by gloG/GLHtyB, gloH/GLHtyA, gloI/GLHtyC, gloJ/GLHtyD and hydroxylated at C-3 by the dioxygenase gloM/GLOXY1), 3R-hydroxyl-L-glutamine (generated from L-glutamine probably by the dioxygenase gloE/GLOXY3) and 3S-hydroxyl-L-proline (generated from L-proline by the dioxygenase gloF/GLOXY2 to yield pneumocandin B0), or 3S-hydroxyl-4S-methyl-L-proline (generated from L-leucine by the dioxygenase gloC/GLOXY4 to yield pneumocandin A0) are sequentially added to the growing chain. The last C domain of gloA/GLNRPS4 is proposed to be responsible for cyclization by condensation to form the peptide bond between L-ornithine and 3S-hydroxyl-4S-methyl-L-proline (for pneumocandin A0) or 3S-hydroxyl-L-proline (for pneumocandin B0). Finally, the subsequent C-4 hydroxylation of 3S-hydroxyl-L-homotyrosine and L-ornithine dihydroxylation at C-4 and C-5 are performed by the cytochrome P450 monooxygenases gloP/GLP450-1 and gloO/GLP450-2, respectively. The protein is Pneumocandin biosynthesis cluster protein B of Glarea lozoyensis (strain ATCC 20868 / MF5171).